The primary structure comprises 244 residues: Pyridoxal phosphate homeostasis protein (244 aa).

Lysine 37 bears the N6-(pyridoxal phosphate)lysine mark.

This sequence belongs to the pyridoxal phosphate-binding protein YggS/PROSC family.

Pyridoxal 5'-phosphate (PLP)-binding protein, which may be involved in intracellular homeostatic regulation of pyridoxal 5'-phosphate (PLP), the active form of vitamin B6. This Caenorhabditis elegans protein is Pyridoxal phosphate homeostasis protein.